We begin with the raw amino-acid sequence, 142 residues long: Small ribosomal subunit protein eS6 (142 aa).

The tract at residues 117–142 is disordered; sequence EKPLDELAPKKEKKEGAAGGRAPAKK. Residues 118 to 132 are compositionally biased toward basic and acidic residues; it reads KPLDELAPKKEKKEG.

The protein belongs to the eukaryotic ribosomal protein eS6 family.

This Methanocella arvoryzae (strain DSM 22066 / NBRC 105507 / MRE50) protein is Small ribosomal subunit protein eS6.